A 470-amino-acid chain; its full sequence is MTMALKKVLAIVLAGGEGNRLMPLTADRAKPAVPFAGGYRLIDFALSNLVNSGYLKIVVLTQYKSHSLDRHISETWRMSTQLGRYVASVPAQQRVGKSWFLGSANAIYQSLNLIHDDAPDIVVVVGADHVYRMDFSQMVEQHIASGAKATVAAVRQPLNMANQFGVIEVDQNDPQKIAAFVEKPASTPGLAADPTQFLASMGNYVFNADALVEALHVDAERLDTKHDMGGDIIPYFVDQGEAGVYDFTLNDIPGATERDRTYWRDVGTIDSFYDAHMDLISPVPIFNLYNSEWPIYTRQSISPPAKFVRGENNTVGTALDSIVASGVVVSGGIVEGSVLSNDAYVAAGSRVQDSVLMDKVRVGEGAVIKRAILDKNVKVPAGAAIGLDPALDKARGYKVTESGITVLAKGQVVPEPGEAELALSAQHRRGLPEAVKAATHDDPDIRDSAEKVAAGIQSRVADAAAQGAAH.

Alpha-D-glucose 1-phosphate is bound by residues Gly165, 182–183 (EK), and Ser200.

This sequence belongs to the bacterial/plant glucose-1-phosphate adenylyltransferase family. In terms of assembly, homotetramer.

It catalyses the reaction alpha-D-glucose 1-phosphate + ATP + H(+) = ADP-alpha-D-glucose + diphosphate. Its pathway is glycan biosynthesis; glycogen biosynthesis. Its function is as follows. Involved in the biosynthesis of ADP-glucose, a building block required for the elongation reactions to produce glycogen. Catalyzes the reaction between ATP and alpha-D-glucose 1-phosphate (G1P) to produce pyrophosphate and ADP-Glc. The chain is Glucose-1-phosphate adenylyltransferase from Paenarthrobacter aurescens (strain TC1).